We begin with the raw amino-acid sequence, 88 residues long: Putative defensin-like protein 256 (88 aa).

A signal peptide spans methionine 1–alanine 25. Cystine bridges form between cysteine 30–cysteine 46, cysteine 36–cysteine 53, and cysteine 40–cysteine 55.

This sequence belongs to the DEFL family.

The protein resides in the secreted. This is Putative defensin-like protein 256 from Arabidopsis thaliana (Mouse-ear cress).